The following is a 397-amino-acid chain: NADH-quinone oxidoreductase subunit D (397 aa).

This sequence belongs to the complex I 49 kDa subunit family. NDH-1 is composed of 14 different subunits. Subunits NuoB, C, D, E, F, and G constitute the peripheral sector of the complex.

The protein localises to the cell inner membrane. It carries out the reaction a quinone + NADH + 5 H(+)(in) = a quinol + NAD(+) + 4 H(+)(out). NDH-1 shuttles electrons from NADH, via FMN and iron-sulfur (Fe-S) centers, to quinones in the respiratory chain. The immediate electron acceptor for the enzyme in this species is believed to be ubiquinone. Couples the redox reaction to proton translocation (for every two electrons transferred, four hydrogen ions are translocated across the cytoplasmic membrane), and thus conserves the redox energy in a proton gradient. This chain is NADH-quinone oxidoreductase subunit D, found in Magnetococcus marinus (strain ATCC BAA-1437 / JCM 17883 / MC-1).